Here is a 455-residue protein sequence, read N- to C-terminus: Ribulose bisphosphate carboxylase large chain (455 aa).

At Lys-5 the chain carries N6,N6,N6-trimethyllysine. Positions 114 and 164 each coordinate substrate. Lys-166 functions as the Proton acceptor in the catalytic mechanism. Residue Lys-168 coordinates substrate. Residues Lys-192, Asp-194, and Glu-195 each contribute to the Mg(2+) site. The residue at position 192 (Lys-192) is an N6-carboxylysine. The Proton acceptor role is filled by His-285. The substrate site is built by Arg-286, His-318, and Ser-370.

The protein belongs to the RuBisCO large chain family. Type I subfamily. Heterohexadecamer of 8 large chains and 8 small chains; disulfide-linked. The disulfide link is formed within the large subunit homodimers. Mg(2+) serves as cofactor. The disulfide bond which can form in the large chain dimeric partners within the hexadecamer appears to be associated with oxidative stress and protein turnover.

It localises to the plastid. The protein localises to the chloroplast. It catalyses the reaction 2 (2R)-3-phosphoglycerate + 2 H(+) = D-ribulose 1,5-bisphosphate + CO2 + H2O. The catalysed reaction is D-ribulose 1,5-bisphosphate + O2 = 2-phosphoglycolate + (2R)-3-phosphoglycerate + 2 H(+). Its function is as follows. RuBisCO catalyzes two reactions: the carboxylation of D-ribulose 1,5-bisphosphate, the primary event in carbon dioxide fixation, as well as the oxidative fragmentation of the pentose substrate in the photorespiration process. Both reactions occur simultaneously and in competition at the same active site. The polypeptide is Ribulose bisphosphate carboxylase large chain (Lupinus microcarpus var. densiflorus (Whitewhorl lupine)).